The chain runs to 223 residues: Large ribosomal subunit protein bL21 (223 aa).

The interval Thr110 to Lys149 is disordered. Basic and acidic residues predominate over residues Pro133–Pro147.

Belongs to the bacterial ribosomal protein bL21 family. As to quaternary structure, part of the 50S ribosomal subunit. Contacts protein L20.

This protein binds to 23S rRNA in the presence of protein L20. This chain is Large ribosomal subunit protein bL21, found in Maricaulis maris (strain MCS10) (Caulobacter maris).